A 123-amino-acid polypeptide reads, in one-letter code: MTKEEIIEAIENMTVLELAELVEELEEKFGVSAAAPVAMAAVPGAQGGEQQEEKTEFDVHLAEIGGKKINVIKVVREVTGLGLKDAKALVDDAPTNVKEGVSKEEAEEIKSKLEDAGATVELK.

A disordered region spans residues 98–123; sequence KEGVSKEEAEEIKSKLEDAGATVELK. Residues 100–115 show a composition bias toward basic and acidic residues; it reads GVSKEEAEEIKSKLED.

It belongs to the bacterial ribosomal protein bL12 family. In terms of assembly, homodimer. Part of the ribosomal stalk of the 50S ribosomal subunit. Forms a multimeric L10(L12)X complex, where L10 forms an elongated spine to which 2 to 4 L12 dimers bind in a sequential fashion. Binds GTP-bound translation factors.

Functionally, forms part of the ribosomal stalk which helps the ribosome interact with GTP-bound translation factors. Is thus essential for accurate translation. The chain is Large ribosomal subunit protein bL12 from Halothermothrix orenii (strain H 168 / OCM 544 / DSM 9562).